A 102-amino-acid chain; its full sequence is Small ribosomal subunit protein uS10 (102 aa).

Belongs to the universal ribosomal protein uS10 family. As to quaternary structure, part of the 30S ribosomal subunit.

Involved in the binding of tRNA to the ribosomes. The chain is Small ribosomal subunit protein uS10 from Pelobacter propionicus (strain DSM 2379 / NBRC 103807 / OttBd1).